Here is a 922-residue protein sequence, read N- to C-terminus: Protein translocase subunit SecA (922 aa).

ATP-binding positions include Gln-87, 105–109 (GEGKT), and Asp-516. The segment at 867–912 (YTAPTETGEPETLPDPRTAGAGGDGLNLPEGVRIGRNDPCPCGSGK) is disordered. Zn(2+) is bound by residues Cys-906, Cys-908, Cys-917, and His-918.

Belongs to the SecA family. As to quaternary structure, monomer and homodimer. Part of the essential Sec protein translocation apparatus which comprises SecA, SecYEG and auxiliary proteins SecDF-YajC and YidC. Zn(2+) is required as a cofactor.

It localises to the cell inner membrane. The protein localises to the cytoplasm. The catalysed reaction is ATP + H2O + cellular proteinSide 1 = ADP + phosphate + cellular proteinSide 2.. Its function is as follows. Part of the Sec protein translocase complex. Interacts with the SecYEG preprotein conducting channel. Has a central role in coupling the hydrolysis of ATP to the transfer of proteins into and across the cell membrane, serving both as a receptor for the preprotein-SecB complex and as an ATP-driven molecular motor driving the stepwise translocation of polypeptide chains across the membrane. In Paracidovorax citrulli (strain AAC00-1) (Acidovorax citrulli), this protein is Protein translocase subunit SecA.